We begin with the raw amino-acid sequence, 294 residues long: MEIGLREWLILIGIIVIAGILFDGWRRMRGGKGKLKFRLDRSYSNLPDEEGSAEVLGPSRVLDTQKEPELDESDLPSLSAPAREREREQKPAKATKRGKRAAEMQPQGDLDLVAEPREPDLFADADDDFAGDNNRNSGFAAAGSAAKELPPVEEVLVISVISRDEGGFKGPALLQNILESGLRFGEMDIFHRHESMAGHGEVLFSMANAVKPGIFDLDDIDHFSTRAVSFFLGLPGPRHPKQAFDVMVAAARKLAHELNGELKDDQRSVLTAQTIEHYRQRIVEFERRALTQKR.

Position 1 (Met-1) is a topological domain, periplasmic. A helical transmembrane segment spans residues 2–22; that stretch reads EIGLREWLILIGIIVIAGILF. The Cytoplasmic segment spans residues 23–294; sequence DGWRRMRGGK…FERRALTQKR (272 aa). Residues 47–107 are disordered; the sequence is PDEEGSAEVL…GKRAAEMQPQ (61 aa). A compositionally biased stretch (basic and acidic residues) spans 82 to 91; the sequence is AREREREQKP.

Belongs to the ZipA family. Interacts with FtsZ via their C-terminal domains.

Its subcellular location is the cell inner membrane. Its function is as follows. Essential cell division protein that stabilizes the FtsZ protofilaments by cross-linking them and that serves as a cytoplasmic membrane anchor for the Z ring. Also required for the recruitment to the septal ring of downstream cell division proteins. The sequence is that of Cell division protein ZipA from Pseudomonas putida (strain W619).